Reading from the N-terminus, the 119-residue chain is Large ribosomal subunit protein uL18 (119 aa).

The protein belongs to the universal ribosomal protein uL18 family. Part of the 50S ribosomal subunit; part of the 5S rRNA/L5/L18/L25 subcomplex. Contacts the 5S and 23S rRNAs.

Functionally, this is one of the proteins that bind and probably mediate the attachment of the 5S RNA into the large ribosomal subunit, where it forms part of the central protuberance. This chain is Large ribosomal subunit protein uL18, found in Cereibacter sphaeroides (strain ATCC 17029 / ATH 2.4.9) (Rhodobacter sphaeroides).